The primary structure comprises 470 residues: Cholesterol 7-desaturase nvd 1 (470 aa).

Residues 67 to 87 form a helical membrane-spanning segment; the sequence is LALCIAGFSVLMYFLYVLVFV. Residues 136 to 238 form the Rieske domain; sequence FRLVDSQQLE…CREVNKAIFV (103 aa). Positions 176, 178, 196, and 199 each coordinate [2Fe-2S] cluster.

The protein belongs to the cholesterol 7-desaturase family. The cofactor is [2Fe-2S] cluster.

The protein localises to the membrane. The catalysed reaction is cholesterol + NADPH + O2 + H(+) = 7-dehydrocholesterol + NADP(+) + 2 H2O. It catalyses the reaction cholesterol + NADH + O2 + H(+) = 7-dehydrocholesterol + NAD(+) + 2 H2O. The protein operates within steroid hormone biosynthesis; dafachronic acid biosynthesis. Functionally, catalyzes the production of 7-dehydrocholesterol (7-DHC or cholesta-5,7-dien-3beta-ol) by inserting a double bond (desaturating) at the C7-C8 single bond of cholesterol. Essential regulator of steroid biosynthesis as this reaction is the first step in the synthesis of the steroid hormone Delta(7)-dafachronic acid. The sequence is that of Cholesterol 7-desaturase nvd 1 from Ciona intestinalis (Transparent sea squirt).